Consider the following 298-residue polypeptide: Syntaxin-4 (298 aa).

Topologically, residues 1-274 (MRDRTHELRQ…NQKKARKKKV (274 aa)) are cytoplasmic. S15, S29, S35, S36, S117, S208, and S248 each carry phosphoserine. Residues 38-163 (DDEFFQKVQT…ERIRRQLKIT (126 aa)) are a coiled coil. An interaction with CENPF region spans residues 154–298 (ERIRRQLKIT…VIIGITITVG (145 aa)). The t-SNARE coiled-coil homology domain maps to 200-262 (LNEISARHSE…ERGQEHVKIA (63 aa)). The chain crosses the membrane as a helical; Anchor for type IV membrane protein span at residues 275–295 (MIAICVSVTVLILAVIIGITI). Residues 296–298 (TVG) lie on the Extracellular side of the membrane.

Belongs to the syntaxin family. As to quaternary structure, found in a complex with VAMP8 and SNAP23. Detected in a complex with SNAP23 and STXBP4. Interacts with SNAP23 and SNAPIN. Interacts with VAMP2. Interacts with LLGL1. Interacts (via C-terminus) with CENPF. Interacts with DOC2B. Interacts with STXBP3; excludes interaction with DOC2B and SNAP25. Interacts with STXBP4; excludes interaction with VAMP2. Component of the SNARE complex composed of STX4, SNAP23 and VAMP7 that interacts with SYT7 during lysosomal exocytosis. Interacts with STXBP6. Interacts with STXBP5L. Expressed in all tissues tested including adipose, brain, testis, intestine, liver, heart, spleen, skeletal muscle and kidney.

Its subcellular location is the cell membrane. It localises to the cell projection. The protein localises to the neuron projection. It is found in the stereocilium. In terms of biological role, plasma membrane t-SNARE that mediates docking of transport vesicles. Necessary for the translocation of SLC2A4 from intracellular vesicles to the plasma membrane. In neurons, recruited at neurite tips to membrane domains rich in the phospholipid 1-oleoyl-2-palmitoyl-PC (OPPC) which promotes neurite tip surface expression of the dopamine transporter SLC6A3/DAT by facilitating fusion of SLC6A3-containing transport vesicles with the plasma membrane. Together with STXB3 and VAMP2, may also play a role in docking/fusion of intracellular GLUT4-containing vesicles with the cell surface in adipocytes and in docking of synaptic vesicles at presynaptic active zones. Required for normal hearing. In Rattus norvegicus (Rat), this protein is Syntaxin-4 (Stx4).